The sequence spans 970 residues: Type III restriction-modification enzyme EcoPI Res subunit (970 aa).

Positions 75-540 (ARSNVIDVSM…EVGRGLRLPV (466 aa)) are helicase-like domain. Residues 894 to 918 (TYSPDFAYVVKTAEGDYLNFIIETK) form an endonuclease domain region.

It belongs to the type III restriction-modification system Res protein family. A heterotetramer with stoichiometry Res(2)Mod(2). Mg(2+) is required as a cofactor. It depends on S-adenosyl-L-methionine as a cofactor.

It carries out the reaction Endonucleolytic cleavage of DNA to give specific double-stranded fragments with terminal 5'-phosphates.. A type III restriction enzyme that recognizes 2 inversely oriented double-stranded sequences 5'-AGACC-3' and cleaves DNA 25-27 base pairs downstream of one site, producing a single-strand 5' protrusion of two nucleotides. DNA restriction requires both the Res and Mod subunits. DNA topology affects its action; relaxed and negatively supercoiled DNA are digested but positively supercoiled DNA is not a good substrate. After binding to one recognition site undergoes random one-dimensional diffusion along DNA until it collides with a stationary enzyme bound to the second DNA site, which is when DNA cleavage occurs. This Enterobacteriaceae (Bacteriophage P1) protein is Type III restriction-modification enzyme EcoPI Res subunit.